Here is a 1756-residue protein sequence, read N- to C-terminus: RANBP2-like and GRIP domain-containing protein 2 (1756 aa).

Serine 21 bears the Phosphoserine mark. 3 TPR repeats span residues 59–92, 583–616, and 647–680; these read PRAHRFLGLLYELEENTEKAVECYRRSLELNPPQ, QKMGRGLNSSYDQQEYIGRSVHYWKKVLPLLKII, and EDAHITFAILDAVHGNIEDAVTAFESIKSVVSYW. Residues 759-804 form a disordered region; that stretch reads GPLYKNGSLRNADSEIKHSTPSPTKYSLSPSKSYKYSPKTPPRWAE. The segment covering 777-796 has biased composition (low complexity); it reads STPSPTKYSLSPSKSYKYSP. One can recognise a RanBD1 1 domain in the interval 1029 to 1165; sequence HFEPVVQMPE…FEECQRLLLD (137 aa). 2 disordered regions span residues 1206–1241 and 1299–1324; these read TKVTEEENKGSGTGAAGASDTTIKPNPENTGPTLEW and AKLNQSGTSVGTDEESDVTQEEERDG. Residues 1228-1237 show a composition bias toward polar residues; sequence IKPNPENTGP. Acidic residues predominate over residues 1310–1322; sequence TDEESDVTQEEER. One can recognise a RanBD1 2 domain in the interval 1326-1462; sequence YFEPVVPLPD…FDEAKTAQEK (137 aa). Residues 1573–1586 show a composition bias toward polar residues; it reads NDSETSSVAQSGSE. Residues 1573–1614 are disordered; sequence NDSETSSVAQSGSESKVEPKKCELSKNSDIEQSSDSKVKNLS. A compositionally biased stretch (basic and acidic residues) spans 1587 to 1610; the sequence is SKVEPKKCELSKNSDIEQSSDSKV. One can recognise a GRIP domain in the interval 1693–1743; the sequence is QEESAANVEHLKNVLLQFIFLKPGSERESLLPVINTMLQLSPEEKGKLAAV.

This is RANBP2-like and GRIP domain-containing protein 2 (RGPD2) from Homo sapiens (Human).